Reading from the N-terminus, the 114-residue chain is UPF0145 protein TT_C1581 (114 aa).

This sequence belongs to the UPF0145 family.

This is UPF0145 protein TT_C1581 from Thermus thermophilus (strain ATCC BAA-163 / DSM 7039 / HB27).